We begin with the raw amino-acid sequence, 329 residues long: uncharacterized protein (329 aa).

Residues Met1–Ser20 are disordered.

This is an uncharacterized protein from Mycobacterium tuberculosis (strain CDC 1551 / Oshkosh).